Reading from the N-terminus, the 209-residue chain is Small ribosomal subunit protein uS5 (209 aa).

In terms of domain architecture, S5 DRBM spans 48-111 (LEDEVLDINM…DAAKLNITYI (64 aa)).

The protein belongs to the universal ribosomal protein uS5 family. As to quaternary structure, part of the 30S ribosomal subunit. Contacts protein S4.

In terms of biological role, with S4 and S12 plays an important role in translational accuracy. The polypeptide is Small ribosomal subunit protein uS5 (Methanosarcina mazei (strain ATCC BAA-159 / DSM 3647 / Goe1 / Go1 / JCM 11833 / OCM 88) (Methanosarcina frisia)).